The following is a 170-amino-acid chain: MARVEL domain-containing protein 1 (170 aa).

At 1–38 the chain is on the cytoplasmic side; sequence MEGERPRSDTVTTTVSSHMETISLGGSIAYDRSFLRSP. An MARVEL domain is found at 34 to 167; sequence FLRSPTGVLL…STYFSFQAWR (134 aa). The chain crosses the membrane as a helical span at residues 39–59; sequence TGVLLLMEIMFGLLVWALIAG. At 60–67 the chain is on the extracellular side; sequence SEYFLFSA. A helical transmembrane segment spans residues 68-88; that stretch reads FGWVMFVAVFYWVLSVFFFLL. The Cytoplasmic portion of the chain corresponds to 89–102; the sequence is HLTRANTRITKVPW. The helical transmembrane segment at 103–123 threads the bilayer; the sequence is SLVGLCFNGSAFVLYLIAAVV. Over 124–145 the chain is Extracellular; that stretch reads EASSVNKDVHQHHNYNSWTASS. A helical membrane pass occupies residues 146–166; sequence FFAFIVTVCYALSTYFSFQAW. Topologically, residues 167-170 are cytoplasmic; it reads RTKS.

The protein localises to the membrane. It localises to the nucleus. The sequence is that of MARVEL domain-containing protein 1 (marveld1) from Xenopus laevis (African clawed frog).